Reading from the N-terminus, the 150-residue chain is Putative solute carrier family 19 member 4 (150 aa).

Positions 118–137 (PSVREGACNEKSTENKKPQD) are disordered. Positions 124 to 136 (ACNEKSTENKKPQ) are enriched in basic and acidic residues.

It belongs to the reduced folate carrier (RFC) transporter (TC 2.A.48) family.

The protein is Putative solute carrier family 19 member 4 of Homo sapiens (Human).